A 160-amino-acid chain; its full sequence is Endoribonuclease YbeY (160 aa).

Zn(2+)-binding residues include histidine 127, histidine 131, and histidine 137.

Belongs to the endoribonuclease YbeY family. Zn(2+) serves as cofactor.

It is found in the cytoplasm. Functionally, single strand-specific metallo-endoribonuclease involved in late-stage 70S ribosome quality control and in maturation of the 3' terminus of the 16S rRNA. The sequence is that of Endoribonuclease YbeY from Synechococcus sp. (strain RCC307).